Consider the following 354-residue polypeptide: Opsin-5 (354 aa).

Residues 1 to 33 (MALNHTALPQDERLPHYLRDGDPFASKLSWEAD) are Extracellular-facing. Asn-4 carries an N-linked (GlcNAc...) asparagine glycan. The chain crosses the membrane as a helical span at residues 34–54 (LVAGFYLTIIGILSTFGNGYV). The Cytoplasmic segment spans residues 55–74 (LYMSSRRKKKLRPAEIMTIN). Residues 75–95 (LAVCDLGISVVGKPFTIISCF) traverse the membrane as a helical segment. Topologically, residues 96 to 108 (CHRWVFGWIGCRW) are extracellular. An intrachain disulfide couples Cys-106 to Cys-183. Residues 109–129 (YGWAGFFFGCGSLITMTAVSL) form a helical membrane-spanning segment. Over 130–150 (DRYLKICYLSYGVWLKRKHAY) the chain is Cytoplasmic. A helical transmembrane segment spans residues 151–171 (ICLAAIWAYASFWTTMPLVGL). Residues 172 to 197 (GDYVPEPFGTSCTLDWWLAQASVGGQ) lie on the Extracellular side of the membrane. A helical membrane pass occupies residues 198–218 (VFILNILFFCLLLPTAVIVFS). Residues 219–252 (YVKIIAKVKSSSKEVAHFDSRIHSSHVLEMKLTK) are Cytoplasmic-facing. The helical transmembrane segment at 253–273 (VAMLICAGFLIAWIPYAVVSV) threads the bilayer. Topologically, residues 274–288 (WSAFGRPDSIPIQLS) are extracellular. A helical transmembrane segment spans residues 289-309 (VVPTLLAKSAAMYNPIIYQVI). Residue Lys-296 is modified to N6-(retinylidene)lysine. Residues 310 to 353 (DYKFACCQTGGLKATKKKSLEGFRLHTVTTVRKSSAVLEIHEEW) lie on the Cytoplasmic side of the membrane. Residues Cys-315 and Cys-316 are each lipidated (S-palmitoyl cysteine).

This sequence belongs to the G-protein coupled receptor 1 family. Opsin subfamily. Post-translationally, it is uncertain whether Cys-315 or Cys-316 is palmitoylated. Detected in brain and retina and cell lines derived from neural retina.

The protein resides in the cell membrane. Its function is as follows. G-protein coupled receptor which selectively activates G(i) type G proteins via ultraviolet A (UVA) light-mediated activation in the retina. Preferentially binds the chromophore 11-cis retinal and is a bistable protein that displays emission peaks at 380 nm (UVA light) and 470 nm (blue light). Required for the light-response in the inner plexiform layer, and contributes to the regulation of the light-response in the nerve fiber layer, via phosphorylated DAT/SLC6A3 dopamine uptake. Involved in local corneal and retinal circadian rhythm photoentrainment via modulation of the UVA light-induced phase-shift of the retina clock. Acts as a circadian photoreceptor in the outer ear, via modulation of circadian clock-gene expression in response to violet light during the light-to-dark transition phase and night phase of the circadian cycle. Required in the retina to negatively regulate hyaloid vessel regression during postnatal development via light-dependent OPN5-SLC32A1-DRD2-VEGFR2 signaling. Involved in the light-dependent regulation of retina and vitreous compartment dopamine levels. The sequence is that of Opsin-5 (OPN5) from Homo sapiens (Human).